We begin with the raw amino-acid sequence, 145 residues long: Small ribosomal subunit protein bS6 (145 aa).

Over residues 113–132 (ENMKKNERKAPKEPVKKDEE) the composition is skewed to basic and acidic residues. Residues 113–145 (ENMKKNERKAPKEPVKKDEEENKESEEEITSEE) form a disordered region. The segment covering 133–145 (ENKESEEEITSEE) has biased composition (acidic residues).

This sequence belongs to the bacterial ribosomal protein bS6 family.

Binds together with bS18 to 16S ribosomal RNA. This is Small ribosomal subunit protein bS6 from Campylobacter hominis (strain ATCC BAA-381 / DSM 21671 / CCUG 45161 / LMG 19568 / NCTC 13146 / CH001A).